Here is a 1475-residue protein sequence, read N- to C-terminus: Protein STU1 (1475 aa).

Disordered regions lie at residues 870–913 (REST…EPDL) and 1113–1134 (DGES…NRPA). The segment covering 887–896 (DGAHGGDARD) has biased composition (basic and acidic residues).

This sequence belongs to the CLASP family. In terms of assembly, interacts with microtubules.

It is found in the cytoplasm. The protein resides in the cytoskeleton. The protein localises to the nucleus. Its subcellular location is the spindle. In terms of biological role, microtubule binding protein that promotes the stabilization of dynamic microtubules. Required for mitotic spindle formation. The chain is Protein STU1 (STU1) from Eremothecium gossypii (strain ATCC 10895 / CBS 109.51 / FGSC 9923 / NRRL Y-1056) (Yeast).